The sequence spans 494 residues: Alpha-amylase-related protein (494 aa).

An N-terminal signal peptide occupies residues methionine 1 to alanine 20. Position 21 is a pyrrolidone carboxylic acid (glutamine 21). A disulfide bond links cysteine 48 and cysteine 104. Residues asparagine 118, glutamine 169, and aspartate 178 each contribute to the Ca(2+) site. Cysteine 157 and cysteine 171 form a disulfide bridge. Arginine 206 serves as a coordination point for chloride. Aspartate 208 (nucleophile) is an active-site residue. A Ca(2+)-binding site is contributed by histidine 212. Catalysis depends on glutamate 245, which acts as the Proton donor. 2 residues coordinate chloride: asparagine 308 and arginine 343. Disulfide bonds link cysteine 376–cysteine 382, cysteine 418–cysteine 441, and cysteine 448–cysteine 460.

Belongs to the glycosyl hydrolase 13 family. As to quaternary structure, monomer. Requires Ca(2+) as cofactor. Chloride serves as cofactor.

It is found in the secreted. It catalyses the reaction Endohydrolysis of (1-&gt;4)-alpha-D-glucosidic linkages in polysaccharides containing three or more (1-&gt;4)-alpha-linked D-glucose units.. In Drosophila lini (Fruit fly), this protein is Alpha-amylase-related protein (Amyrel).